We begin with the raw amino-acid sequence, 99 residues long: MAHLSLNQYKCTHIIMHGTCLSGLYPVPFTHKAHDYPHFNIYISFGGPKYCITALNTYVIPLFHHLLSTQFIYTYVNITKKSPLKSPKHKNILSFNDNT.

Belongs to the UPF0320 family.

This is UPF0320 protein YER188C-A from Saccharomyces cerevisiae (strain ATCC 204508 / S288c) (Baker's yeast).